The sequence spans 540 residues: Cytochrome P450 monooxygenase CYP3 (540 aa).

Residue Asn-2 is glycosylated (N-linked (GlcNAc...) asparagine). The helical transmembrane segment at 26-46 (IFGLSSSTLVVLVAMIAVSTL) threads the bilayer. N-linked (GlcNAc...) asparagine glycans are attached at residues Asn-100, Asn-210, and Asn-400. Cys-471 contacts heme.

This sequence belongs to the cytochrome P450 family. Requires heme as cofactor.

Its subcellular location is the membrane. Its pathway is secondary metabolite biosynthesis. In terms of biological role, cytochrome P450 monooxygenase; part of the gene cluster that mediates the biosynthesis of itaconic acid and 2-hydroxyparaconate. Cis-aconitate is secreted by the mitochondrial tricarboxylate transporter MTT1. In the cytosol cis-aconitate is converted into trans-aconitate via isomerization by the aconitate-delta-isomerase ADI1. Decarboxylation of trans-aconitate by the trans-aconitate decarboxylase TAD1 then leads then to the production of itaconic acid. The cytochrome P450 monooxygenase CYP3 further converts itaconate to 2-hydroxyparaconate via oxidation of the double bond, leading to a transient epoxide, which can subsequently be lactonized to produce 2-hydroxyparaconate. Secretion of itaconate and possibly 2-hydroxyparaconate into the medium is mediated by the major facilitator ITP1. The glyoxalase domain-containing protein RDO1 is not involved in the biosynthesis of itaconate and 2-hydroxyparaconate, however, it might play a role in the further conversion of 2-hydroxyparaconate to itatartarate. The protein is Cytochrome P450 monooxygenase CYP3 of Mycosarcoma maydis (Corn smut fungus).